A 212-amino-acid polypeptide reads, in one-letter code: Probable nicotinate-nucleotide adenylyltransferase (212 aa).

It belongs to the NadD family.

It carries out the reaction nicotinate beta-D-ribonucleotide + ATP + H(+) = deamido-NAD(+) + diphosphate. It participates in cofactor biosynthesis; NAD(+) biosynthesis; deamido-NAD(+) from nicotinate D-ribonucleotide: step 1/1. Its function is as follows. Catalyzes the reversible adenylation of nicotinate mononucleotide (NaMN) to nicotinic acid adenine dinucleotide (NaAD). This is Probable nicotinate-nucleotide adenylyltransferase from Saccharopolyspora erythraea (strain ATCC 11635 / DSM 40517 / JCM 4748 / NBRC 13426 / NCIMB 8594 / NRRL 2338).